The chain runs to 497 residues: Glutathione hydrolase 6 (497 aa).

Residues 1–34 (MDATTGPVHYHKLQLWEPGVESEEEEEEEEEEIA) are disordered. Residues 1 to 51 (MDATTGPVHYHKLQLWEPGVESEEEEEEEEEEIAEPLVLSLRRLQNTPRNE) lie on the Cytoplasmic side of the membrane. Residues 20–34 (VESEEEEEEEEEEIA) show a composition bias toward acidic residues. Residues 52–72 (VGGLPGAWARLLAGLLLLAVS) form a helical; Signal-anchor for type II membrane protein membrane-spanning segment. Over 73–497 (SSLALRQLHS…PSGCCPFQGY (425 aa)) the chain is Extracellular. Residues Asn-164, Asn-169, Asn-367, and Asn-378 are each glycosylated (N-linked (GlcNAc...) asparagine).

This sequence belongs to the gamma-glutamyltransferase family. As to quaternary structure, heterodimer composed of the light and heavy chains. The active site is located in the light chain. Cleaved by autocatalysis into a large and a small subunit and the autocatalytic cleavage is essential to the functional activation of the enzyme.

Its subcellular location is the membrane. The catalysed reaction is an N-terminal (5-L-glutamyl)-[peptide] + an alpha-amino acid = 5-L-glutamyl amino acid + an N-terminal L-alpha-aminoacyl-[peptide]. It carries out the reaction glutathione + H2O = L-cysteinylglycine + L-glutamate. The enzyme catalyses an S-substituted glutathione + H2O = an S-substituted L-cysteinylglycine + L-glutamate. The protein operates within sulfur metabolism; glutathione metabolism. Its function is as follows. Hydrolyzes and transfers gamma-glutamyl moieties from glutathione and other gamma-glutamyl compounds to acceptors. This is Glutathione hydrolase 6 from Mus musculus (Mouse).